Here is a 454-residue protein sequence, read N- to C-terminus: Tubulin alpha-A chain (454 aa).

Positions 12, 72, 141, 145, 146, 180, 207, and 229 each coordinate GTP. Asp72 is a Mg(2+) binding site. Glu255 is a catalytic residue.

The protein belongs to the tubulin family. In terms of assembly, dimer of alpha and beta chains. A typical microtubule is a hollow water-filled tube with an outer diameter of 25 nm and an inner diameter of 15 nM. Alpha-beta heterodimers associate head-to-tail to form protofilaments running lengthwise along the microtubule wall with the beta-tubulin subunit facing the microtubule plus end conferring a structural polarity. Microtubules usually have 13 protofilaments but different protofilament numbers can be found in some organisms and specialized cells. Mg(2+) is required as a cofactor.

It localises to the cytoplasm. It is found in the cytoskeleton. It carries out the reaction GTP + H2O = GDP + phosphate + H(+). Tubulin is the major constituent of microtubules, a cylinder consisting of laterally associated linear protofilaments composed of alpha- and beta-tubulin heterodimers. Microtubules grow by the addition of GTP-tubulin dimers to the microtubule end, where a stabilizing cap forms. Below the cap, tubulin dimers are in GDP-bound state, owing to GTPase activity of alpha-tubulin. The sequence is that of Tubulin alpha-A chain (tba-1) from Neurospora crassa (strain ATCC 24698 / 74-OR23-1A / CBS 708.71 / DSM 1257 / FGSC 987).